We begin with the raw amino-acid sequence, 183 residues long: ATP synthase subunit delta (183 aa).

Belongs to the ATPase delta chain family. F-type ATPases have 2 components, F(1) - the catalytic core - and F(0) - the membrane proton channel. F(1) has five subunits: alpha(3), beta(3), gamma(1), delta(1), epsilon(1). F(0) has three main subunits: a(1), b(2) and c(10-14). The alpha and beta chains form an alternating ring which encloses part of the gamma chain. F(1) is attached to F(0) by a central stalk formed by the gamma and epsilon chains, while a peripheral stalk is formed by the delta and b chains.

It is found in the cell inner membrane. F(1)F(0) ATP synthase produces ATP from ADP in the presence of a proton or sodium gradient. F-type ATPases consist of two structural domains, F(1) containing the extramembraneous catalytic core and F(0) containing the membrane proton channel, linked together by a central stalk and a peripheral stalk. During catalysis, ATP synthesis in the catalytic domain of F(1) is coupled via a rotary mechanism of the central stalk subunits to proton translocation. Its function is as follows. This protein is part of the stalk that links CF(0) to CF(1). It either transmits conformational changes from CF(0) to CF(1) or is implicated in proton conduction. This chain is ATP synthase subunit delta, found in Syntrophobacter fumaroxidans (strain DSM 10017 / MPOB).